The primary structure comprises 1508 residues: DNA-directed RNA polymerase subunit beta' (1508 aa).

Zn(2+) is bound by residues Cys-71, Cys-73, Cys-86, and Cys-89. Residues Asp-470, Asp-472, and Asp-474 each coordinate Mg(2+). Residues Cys-804, Cys-878, Cys-885, and Cys-888 each coordinate Zn(2+).

Belongs to the RNA polymerase beta' chain family. In terms of assembly, the RNAP catalytic core consists of 2 alpha, 1 beta, 1 beta' and 1 omega subunit. When a sigma factor is associated with the core the holoenzyme is formed, which can initiate transcription. Mg(2+) serves as cofactor. Requires Zn(2+) as cofactor.

The enzyme catalyses RNA(n) + a ribonucleoside 5'-triphosphate = RNA(n+1) + diphosphate. DNA-dependent RNA polymerase catalyzes the transcription of DNA into RNA using the four ribonucleoside triphosphates as substrates. In Campylobacter fetus subsp. fetus (strain 82-40), this protein is DNA-directed RNA polymerase subunit beta'.